A 418-amino-acid chain; its full sequence is Tyrosine--tRNA ligase (418 aa).

Residue tyrosine 34 coordinates L-tyrosine. The 'HIGH' region motif lies at 39 to 48 (PTADSLHLGH). Positions 169 and 173 each coordinate L-tyrosine. Positions 229–233 (KFGKS) match the 'KMSKS' region motif. Position 232 (lysine 232) interacts with ATP. The 67-residue stretch at 352 to 418 (HNIVELLVTA…GKKKYFVLTY (67 aa)) folds into the S4 RNA-binding domain.

It belongs to the class-I aminoacyl-tRNA synthetase family. TyrS type 1 subfamily. As to quaternary structure, homodimer.

Its subcellular location is the cytoplasm. The catalysed reaction is tRNA(Tyr) + L-tyrosine + ATP = L-tyrosyl-tRNA(Tyr) + AMP + diphosphate + H(+). Catalyzes the attachment of tyrosine to tRNA(Tyr) in a two-step reaction: tyrosine is first activated by ATP to form Tyr-AMP and then transferred to the acceptor end of tRNA(Tyr). The polypeptide is Tyrosine--tRNA ligase (Streptococcus mutans serotype c (strain ATCC 700610 / UA159)).